The following is a 489-amino-acid chain: Probable cytosol aminopeptidase (489 aa).

Mn(2+) contacts are provided by Lys260 and Asp265. Lys272 is a catalytic residue. Positions 283, 342, and 344 each coordinate Mn(2+). Arg346 is an active-site residue.

The protein belongs to the peptidase M17 family. Mn(2+) is required as a cofactor.

Its subcellular location is the cytoplasm. The enzyme catalyses Release of an N-terminal amino acid, Xaa-|-Yaa-, in which Xaa is preferably Leu, but may be other amino acids including Pro although not Arg or Lys, and Yaa may be Pro. Amino acid amides and methyl esters are also readily hydrolyzed, but rates on arylamides are exceedingly low.. The catalysed reaction is Release of an N-terminal amino acid, preferentially leucine, but not glutamic or aspartic acids.. Its function is as follows. Presumably involved in the processing and regular turnover of intracellular proteins. Catalyzes the removal of unsubstituted N-terminal amino acids from various peptides. This chain is Probable cytosol aminopeptidase, found in Alcanivorax borkumensis (strain ATCC 700651 / DSM 11573 / NCIMB 13689 / SK2).